The sequence spans 267 residues: Cytochrome b (267 aa).

Helical transmembrane passes span 33–53 (FGSL…FLAM), 77–98 (WLIR…FIHV), 113–133 (WNIG…GYVL), and 178–198 (FFAF…VHLL). The heme b site is built by His-83 and His-97. Positions 182 and 196 each coordinate heme b. A ubiquinone is bound at residue His-201. The chain crosses the membrane as a helical span at residues 226 to 246 (IKDLLGVILLLMVLMILVLFF).

The protein belongs to the cytochrome b family. In terms of assembly, the cytochrome bc1 complex contains 11 subunits: 3 respiratory subunits (MT-CYB, CYC1 and UQCRFS1), 2 core proteins (UQCRC1 and UQCRC2) and 6 low-molecular weight proteins (UQCRH/QCR6, UQCRB/QCR7, UQCRQ/QCR8, UQCR10/QCR9, UQCR11/QCR10 and a cleavage product of UQCRFS1). This cytochrome bc1 complex then forms a dimer. Heme b is required as a cofactor.

The protein resides in the mitochondrion inner membrane. Its function is as follows. Component of the ubiquinol-cytochrome c reductase complex (complex III or cytochrome b-c1 complex) that is part of the mitochondrial respiratory chain. The b-c1 complex mediates electron transfer from ubiquinol to cytochrome c. Contributes to the generation of a proton gradient across the mitochondrial membrane that is then used for ATP synthesis. The sequence is that of Cytochrome b (MT-CYB) from Abrothrix olivaceus (Olive grass mouse).